We begin with the raw amino-acid sequence, 318 residues long: UDP-N-acetylenolpyruvoylglucosamine reductase (318 aa).

Residues 38–204 enclose the FAD-binding PCMH-type domain; the sequence is IGGVCPVIVE…LGIEILLKEG (167 aa). Arg-182 is a catalytic residue. Basic and acidic residues predominate over residues 212–229; that stretch reads SLKDKRDRRNSSQPENKK. The tract at residues 212–232 is disordered; that stretch reads SLKDKRDRRNSSQPENKKSAG. Residue Ser-233 is the Proton donor of the active site. The active site involves Glu-310.

Belongs to the MurB family. It depends on FAD as a cofactor.

It localises to the cytoplasm. It catalyses the reaction UDP-N-acetyl-alpha-D-muramate + NADP(+) = UDP-N-acetyl-3-O-(1-carboxyvinyl)-alpha-D-glucosamine + NADPH + H(+). It functions in the pathway cell wall biogenesis; peptidoglycan biosynthesis. Cell wall formation. This Leptospira interrogans serogroup Icterohaemorrhagiae serovar copenhageni (strain Fiocruz L1-130) protein is UDP-N-acetylenolpyruvoylglucosamine reductase.